The primary structure comprises 229 residues: Small ribosomal subunit protein uS5 (229 aa).

The S5 DRBM domain occupies 61–124 (LEEQVLDVKL…AHAKLSLIKV (64 aa)).

It belongs to the universal ribosomal protein uS5 family. As to quaternary structure, part of the 30S ribosomal subunit. Contacts protein S4.

In terms of biological role, with S4 and S12 plays an important role in translational accuracy. This is Small ribosomal subunit protein uS5 from Methanococcus maripaludis (strain C6 / ATCC BAA-1332).